The sequence spans 167 residues: N-alpha-acetyltransferase (167 aa).

The region spanning 12–167 (FTLRNARMDD…EDAYLMARPL (156 aa)) is the N-acetyltransferase domain. Substrate is bound at residue tyrosine 37. Residue histidine 88 coordinates Zn(2+). Acetyl-CoA is bound by residues 92–94 (IAV) and 100–105 (RKGIAT). Glutamate 127 lines the Zn(2+) pocket. Residues asparagine 132 and 139 to 141 (YEK) contribute to the acetyl-CoA site. Substrate is bound at residue tyrosine 154.

It belongs to the acetyltransferase family. ARD1 subfamily. Homodimer.

The protein localises to the cytoplasm. It catalyses the reaction N-terminal L-alanyl-[protein] + acetyl-CoA = N-terminal N(alpha)-acetyl-L-alanyl-[protein] + CoA + H(+). It carries out the reaction N-terminal L-seryl-[protein] + acetyl-CoA = N-terminal N(alpha)-acetyl-L-seryl-[protein] + CoA + H(+). The catalysed reaction is N-terminal L-methionyl-L-leucyl-[protein] + acetyl-CoA = N-terminal N(alpha)-acetyl-L-methionyl-L-leucyl-[protein] + CoA + H(+). The enzyme catalyses N-terminal L-methionyl-L-glutamyl-[protein] + acetyl-CoA = N-terminal N(alpha)-acetyl-L-methionyl-L-glutamyl-[protein] + CoA + H(+). Its function is as follows. Displays alpha (N-terminal) acetyltransferase activity. Catalyzes the covalent attachment of an acetyl moiety from acetyl-CoA to the free alpha-amino group at the N-terminus of a protein. NAT is able to acetylate the alpha-amino group of methionine, alanine and serine N-terminal residue substrates, however it has a preference for Ser-N-terminal substrates. In Saccharolobus solfataricus (strain ATCC 35092 / DSM 1617 / JCM 11322 / P2) (Sulfolobus solfataricus), this protein is N-alpha-acetyltransferase.